The following is a 351-amino-acid chain: Photosystem II D2 protein (351 aa).

Residues 39–59 (TAYLAIGGWLTGTTFVTSWYT) traverse the membrane as a helical segment. Position 116 (His116) interacts with chlorophyll a. A helical transmembrane segment spans residues 123–139 (GFMLRQFEIARLVGIRP). Gln128 and Asn141 together coordinate pheophytin a. The chain crosses the membrane as a helical span at residues 151-164 (VFVSVFLMYPLGQS). Position 196 (His196) interacts with chlorophyll a. The chain crosses the membrane as a helical span at residues 206-226 (GALLCAIHGATVENTLFEDGE). A plastoquinone-binding residues include His213 and Phe260. Residue His213 participates in Fe cation binding. His267 contributes to the Fe cation binding site. Residues 277 to 293 (GLWTSSIGIIGLALNLR) form a helical membrane-spanning segment.

The protein belongs to the reaction center PufL/M/PsbA/D family. As to quaternary structure, PSII is composed of 1 copy each of membrane proteins PsbA, PsbB, PsbC, PsbD, PsbE, PsbF, PsbH, PsbI, PsbJ, PsbK, PsbL, PsbM, PsbT, PsbX, PsbY, PsbZ, Psb30/Ycf12, peripheral proteins PsbO, CyanoQ (PsbQ), PsbU, PsbV and a large number of cofactors. It forms dimeric complexes. The D1/D2 heterodimer binds P680, chlorophylls that are the primary electron donor of PSII, and subsequent electron acceptors. It shares a non-heme iron and each subunit binds pheophytin, quinone, additional chlorophylls, carotenoids and lipids. There is also a Cl(-1) ion associated with D1 and D2, which is required for oxygen evolution. The PSII complex binds additional chlorophylls, carotenoids and specific lipids. serves as cofactor.

The protein resides in the cellular thylakoid membrane. The enzyme catalyses 2 a plastoquinone + 4 hnu + 2 H2O = 2 a plastoquinol + O2. Functionally, photosystem II (PSII) is a light-driven water:plastoquinone oxidoreductase that uses light energy to abstract electrons from H(2)O, generating O(2) and a proton gradient subsequently used for ATP formation. It consists of a core antenna complex that captures photons, and an electron transfer chain that converts photonic excitation into a charge separation. The D1/D2 (PsbA/PsbD) reaction center heterodimer binds P680, the primary electron donor of PSII as well as several subsequent electron acceptors. D2 is needed for assembly of a stable PSII complex. In Synechococcus sp. (strain CC9605), this protein is Photosystem II D2 protein.